We begin with the raw amino-acid sequence, 607 residues long: Pescadillo homolog (607 aa).

A disordered region spans residues 301–341 (ANVVEQSEKTTEDADEEPETEENLDEFKPADGADNEDSKSL). Residues 313–324 (DADEEPETEENL) are compositionally biased toward acidic residues. Residues 325-339 (DEFKPADGADNEDSK) show a composition bias toward basic and acidic residues. A BRCT domain is found at 348–441 (SNTSLFSNFT…ILERTDLYAC (94 aa)). The stretch at 497-604 (ENVEQIDDAE…RDIEKRKKLK (108 aa)) forms a coiled coil. The interval 531–607 (QNSKSAKKTK…EKRKKLKVEN (77 aa)) is disordered. Basic and acidic residues-rich tracts occupy residues 544–561 (RDTL…KELS) and 595–607 (RDIE…KVEN).

Belongs to the pescadillo family. Component of the NOP7 complex, composed of erb1/SPBC4F6.13c, ppp1/SPBC19F5.05c and ytm1/SPAC890.04c. Within the NOP7 complex erb1/SPBC4F6.13c appears to interact directly with ppp1/SPBC19F5.05c and ytm1/SPAC890.04c. The NOP7 complex also associates with the 66S pre-ribosome.

The protein localises to the nucleus. It localises to the nucleoplasm. Its subcellular location is the nucleolus. Component of the NOP7 complex, which is required for maturation of the 25S and 5.8S ribosomal RNAs and formation of the 60S ribosome. The protein is Pescadillo homolog (ppp1) of Schizosaccharomyces pombe (strain 972 / ATCC 24843) (Fission yeast).